The sequence spans 296 residues: MARCERLRGAALRDVLGRAQGVLFDCDGVLWNGERAVPGAPELLERLARAGKAALFVSNNSRRARPELALRFARLGFGGLRAEQLFSSALCAARLLRQRLPGPPDAPGAVFVLGGEGLRAELRAAGLRLAGDPSAGDGAAPRVRAVLVGYDEHFSFAKLREACAHLRDPECLLVATDRDPWHPLSDGSRTPGTGSLAAAVETASGRQALVVGKPSPYMFECITENFSIDPARTLMVGDRLETDILFGHRCGMTTVLTLTGVSRLEEAQAYLAAGQHDLVPHYYVESIADLTEGLED.

Asp-25 (nucleophile) is an active-site residue. Residues Asp-25 and Asp-27 each coordinate Mg(2+). The active-site Proton donor is Asp-27. Substrate-binding positions include 58-60 (SNN), His-182, and Lys-213. Residue Asp-238 coordinates Mg(2+).

Belongs to the HAD-like hydrolase superfamily. As to quaternary structure, homodimer. Mg(2+) serves as cofactor. In terms of tissue distribution, ubiquitously expressed (at protein level). Highly expressed in all the regions of central nerve system except the spinal cord. Also expressed at high level in liver and testis. In fetus, it is weakly expressed in all organs except brain.

Its subcellular location is the cytoplasm. It localises to the cytosol. The protein resides in the cytoskeleton. It is found in the cell projection. The protein localises to the ruffle membrane. Its subcellular location is the lamellipodium membrane. It localises to the cell membrane. The enzyme catalyses pyridoxal 5'-phosphate + H2O = pyridoxal + phosphate. It catalyses the reaction pyridoxine 5'-phosphate + H2O = pyridoxine + phosphate. The catalysed reaction is pyridoxamine + phosphate = pyridoxamine 5'-phosphate + H2O. It carries out the reaction O-phospho-L-seryl-[protein] + H2O = L-seryl-[protein] + phosphate. Inhibited by NaF, Zn(2+), Ca(2+), Mn(2+) and EDTA. Functionally, functions as a pyridoxal phosphate (PLP) phosphatase, which also catalyzes the dephosphorylation of pyridoxine 5'-phosphate (PNP) and pyridoxamine 5'-phosphate (PMP), with order of substrate preference PLP &gt; PNP &gt; PMP and therefore plays a role in vitamin B6 metabolism. Also functions as a protein serine phosphatase that specifically dephosphorylates 'Ser-3' in proteins of the actin-depolymerizing factor (ADF)/cofilin family like CFL1 and DSTN. Thereby, regulates cofilin-dependent actin cytoskeleton reorganization, being required for normal progress through mitosis and normal cytokinesis. Does not dephosphorylate phosphothreonines in LIMK1. Does not dephosphorylate peptides containing phosphotyrosine. This chain is Chronophin, found in Homo sapiens (Human).